Consider the following 560-residue polypeptide: Protein GAT2 (560 aa).

3 disordered regions span residues R274–K297, F345–S383, and L412–K461. Low complexity predominate over residues S347–P361. Basic and acidic residues predominate over residues R369–M378. Basic residues predominate over residues T414–A425. Positions R428 to A456 are enriched in polar residues. A GATA-type zinc finger spans residues C472 to C497.

The protein is Protein GAT2 (GAT2) of Saccharomyces cerevisiae (strain ATCC 204508 / S288c) (Baker's yeast).